A 133-amino-acid chain; its full sequence is MAVNDPIADMLTRIRNASEARHATTVVPASRLARSIAEVLKREGFIADFEESGEGVQRHLVLSLKYKGKNQQPIIKALKRVSKPGLRVYSNRRDLPRVLGGIGIAIISTSQGIMTDRDARRQGVGGEVLCYVW.

It belongs to the universal ribosomal protein uS8 family. As to quaternary structure, part of the 30S ribosomal subunit. Contacts proteins S5 and S12.

Its function is as follows. One of the primary rRNA binding proteins, it binds directly to 16S rRNA central domain where it helps coordinate assembly of the platform of the 30S subunit. The polypeptide is Small ribosomal subunit protein uS8 (Synechococcus elongatus (strain ATCC 33912 / PCC 7942 / FACHB-805) (Anacystis nidulans R2)).